We begin with the raw amino-acid sequence, 179 residues long: Peptidyl-tRNA hydrolase (179 aa).

Position 15 (Tyr-15) interacts with tRNA. His-20 functions as the Proton acceptor in the catalytic mechanism. Positions 66, 68, and 114 each coordinate tRNA.

Belongs to the PTH family. As to quaternary structure, monomer.

It localises to the cytoplasm. The enzyme catalyses an N-acyl-L-alpha-aminoacyl-tRNA + H2O = an N-acyl-L-amino acid + a tRNA + H(+). Hydrolyzes ribosome-free peptidyl-tRNAs (with 1 or more amino acids incorporated), which drop off the ribosome during protein synthesis, or as a result of ribosome stalling. Its function is as follows. Catalyzes the release of premature peptidyl moieties from peptidyl-tRNA molecules trapped in stalled 50S ribosomal subunits, and thus maintains levels of free tRNAs and 50S ribosomes. The sequence is that of Peptidyl-tRNA hydrolase from Chlamydia trachomatis serovar L2 (strain ATCC VR-902B / DSM 19102 / 434/Bu).